The primary structure comprises 189 residues: Ras-like protein rasG (189 aa).

GTP is bound at residue 10-17; it reads GGGGVGKS. An Effector region motif is present at residues 32-40; the sequence is YDPTIEDSY. Residues 57–61 and 116–119 contribute to the GTP site; these read DTAGQ and NKCD. The tract at residues 169-189 is disordered; sequence KGDSKPEKGKKKRPLKACTLL. Cys186 bears the Cysteine methyl ester mark. Residue Cys186 is the site of S-geranylgeranyl cysteine attachment. A propeptide spans 187-189 (removed in mature form); that stretch reads TLL.

It belongs to the small GTPase superfamily. Ras family. As to quaternary structure, interacts with ripA.

It is found in the cell membrane. The enzyme catalyses GTP + H2O = GDP + phosphate + H(+). With respect to regulation, alternates between an inactive form bound to GDP and an active form bound to GTP. Activated by a guanine nucleotide-exchange factor (GEF) and inactivated by a GTPase-activating protein (GAP). Ras proteins bind GDP/GTP and possess intrinsic GTPase activity. The protein is Ras-like protein rasG (rasG) of Dictyostelium discoideum (Social amoeba).